A 286-amino-acid chain; its full sequence is 3-hydroxyanthranilate 3,4-dioxygenase (286 aa).

The tract at residues 1–160 (MERRVRVKSW…SEQYRTGKPN (160 aa)) is domain A (catalytic). Arg-43 serves as a coordination point for O2. The Fe cation site is built by His-47, Glu-53, and His-91. Glu-53 contacts substrate. Positions 95 and 105 each coordinate substrate. Residues 161-177 (PDQLLKELPFPLNTRSI) form a linker region. The domain B stretch occupies residues 178-286 (MKPMSLKAWL…QDPARKKPWW (109 aa)).

The protein belongs to the 3-HAO family. In terms of assembly, monomer. The cofactor is Fe(2+).

The protein resides in the cytoplasm. It localises to the cytosol. The enzyme catalyses 3-hydroxyanthranilate + O2 = (2Z,4Z)-2-amino-3-carboxymuconate 6-semialdehyde. It functions in the pathway cofactor biosynthesis; NAD(+) biosynthesis; quinolinate from L-kynurenine: step 3/3. In terms of biological role, catalyzes the oxidative ring opening of 3-hydroxyanthranilate to 2-amino-3-carboxymuconate semialdehyde, which spontaneously cyclizes to quinolinate. The polypeptide is 3-hydroxyanthranilate 3,4-dioxygenase (Haao) (Mus musculus (Mouse)).